The chain runs to 115 residues: Guanylin (115 aa).

Positions 1–21 (MNAFLLSALCLLGAWAALAGG) are cleaved as a signal peptide. Disulfide bonds link Cys-69-Cys-82, Cys-104-Cys-112, and Cys-107-Cys-115.

The protein belongs to the guanylin family. As to expression, highly expressed in ileum and colon. Found in plasma.

The protein resides in the secreted. In terms of biological role, endogenous activator of intestinal guanylate cyclase. It stimulates this enzyme through the same receptor binding region as the heat-stable enterotoxins. The polypeptide is Guanylin (GUCA2A) (Homo sapiens (Human)).